Reading from the N-terminus, the 350-residue chain is Cephaeline 6'-O-methyltransferase IpeOMT1 (350 aa).

Residues Gly193, Asp216, Asp236, Met237, and Lys250 each contribute to the S-adenosyl-L-methionine site. His254 functions as the Proton acceptor in the catalytic mechanism.

This sequence belongs to the class I-like SAM-binding methyltransferase superfamily. Cation-independent O-methyltransferase family. Expressed in roots.

It is found in the cytoplasm. The protein resides in the cytosol. The catalysed reaction is cephaeline + S-adenosyl-L-methionine = emetine + S-adenosyl-L-homocysteine + H(+). The enzyme catalyses deacetylisoipecoside + S-adenosyl-L-methionine = 6-O-methyldeacetylisoipecoside + S-adenosyl-L-homocysteine + H(+). It catalyses the reaction 7-O-methyldeacetylisoipecoside + S-adenosyl-L-methionine = 6,7-O,O-dimethyldeacetylisoipecoside + S-adenosyl-L-homocysteine + H(+). It carries out the reaction norcoclaurine + S-adenosyl-L-methionine = coclaurine + S-adenosyl-L-homocysteine + H(+). The catalysed reaction is (S)-norprotosinomenine + S-adenosyl-L-methionine = (S)-6-O-methylnorprotosinomenine + S-adenosyl-L-homocysteine + H(+). The enzyme catalyses (R)-norprotosinomenine + S-adenosyl-L-methionine = (R)-6-O-methylnorprotosinomenine + S-adenosyl-L-homocysteine + H(+). The protein operates within alkaloid biosynthesis. Its function is as follows. O-methyltransferase involved in the biosynthesis of ipecac and benzylisoquinoline monoterpenoid-isoquinoline alkaloids natural products, starting by the condensation of dopamine and secologanin, and including emetine and cephaeline, drugs used both as anti-protozoal (e.g. treatment of ameobiasis) and as emetic agents. Mediates cephaeline 6'-O-methylation to produce emetine. Catalyzes the 6-O-methylation of N-deacetylisoipecoside, 7-O-methyl-N-deacetylisoipecoside, isococlaurine, norcoclaurine, (S)-norprotosinomenine and (R)-norprotosinomenine, and, with a lower efficiency, of 4'-O-methyllaudanosoline, isoorientaline and protosinomenine. Supports also the 4'-O-methylation of nororientaline. This chain is Cephaeline 6'-O-methyltransferase IpeOMT1, found in Carapichea ipecacuanha (Ipecac).